Reading from the N-terminus, the 263-residue chain is Isoprenyl transferase (263 aa).

Asp-38 is an active-site residue. Asp-38 contributes to the Mg(2+) binding site. Residues Gly-39 to Arg-42, His-55, and Ser-83 to Asp-85 contribute to the substrate site. The active-site Proton acceptor is the Asn-86. Substrate-binding positions include Phe-87, Arg-89, Arg-212, and Arg-218–Ser-220. Glu-231 serves as a coordination point for Mg(2+).

Belongs to the UPP synthase family. Homodimer. The cofactor is Mg(2+).

Its function is as follows. Catalyzes the condensation of isopentenyl diphosphate (IPP) with allylic pyrophosphates generating different type of terpenoids. This chain is Isoprenyl transferase, found in Thermus thermophilus (strain ATCC 27634 / DSM 579 / HB8).